Here is a 276-residue protein sequence, read N- to C-terminus: Bifunctional protein FolD (276 aa).

NADP(+) contacts are provided by residues 158 to 160 (NRS), S183, and I224.

The protein belongs to the tetrahydrofolate dehydrogenase/cyclohydrolase family. As to quaternary structure, homodimer.

It carries out the reaction (6R)-5,10-methylene-5,6,7,8-tetrahydrofolate + NADP(+) = (6R)-5,10-methenyltetrahydrofolate + NADPH. It catalyses the reaction (6R)-5,10-methenyltetrahydrofolate + H2O = (6R)-10-formyltetrahydrofolate + H(+). Its pathway is one-carbon metabolism; tetrahydrofolate interconversion. In terms of biological role, catalyzes the oxidation of 5,10-methylenetetrahydrofolate to 5,10-methenyltetrahydrofolate and then the hydrolysis of 5,10-methenyltetrahydrofolate to 10-formyltetrahydrofolate. The polypeptide is Bifunctional protein FolD (Picrophilus torridus (strain ATCC 700027 / DSM 9790 / JCM 10055 / NBRC 100828 / KAW 2/3)).